Consider the following 130-residue polypeptide: Small ribosomal subunit protein uS11 (130 aa).

This sequence belongs to the universal ribosomal protein uS11 family. In terms of assembly, part of the 30S ribosomal subunit. Interacts with proteins S7 and S18. Binds to IF-3.

Located on the platform of the 30S subunit, it bridges several disparate RNA helices of the 16S rRNA. Forms part of the Shine-Dalgarno cleft in the 70S ribosome. This is Small ribosomal subunit protein uS11 from Xanthomonas campestris pv. campestris (strain B100).